The sequence spans 436 residues: tRNA (guanine(37)-N(1))-methyltransferase 1 (436 aa).

S-adenosyl-L-methionine is bound by residues His-229, 277–278 (DL), and Asn-325.

This sequence belongs to the class I-like SAM-binding methyltransferase superfamily. TRM5/TYW2 family. In terms of assembly, monomer.

The protein localises to the mitochondrion matrix. It localises to the nucleus. It is found in the cytoplasm. It catalyses the reaction guanosine(37) in tRNA + S-adenosyl-L-methionine = N(1)-methylguanosine(37) in tRNA + S-adenosyl-L-homocysteine + H(+). Functionally, specifically methylates the N1 position of guanosine-37 in various cytoplasmic and mitochondrial tRNAs. Methylation is not dependent on the nature of the nucleoside 5' of the target nucleoside. This is the first step in the biosynthesis of wybutosine (yW), a modified base adjacent to the anticodon of tRNAs and required for accurate decoding. In Phaeodactylum tricornutum (strain CCAP 1055/1), this protein is tRNA (guanine(37)-N(1))-methyltransferase 1.